The sequence spans 489 residues: Serine/arginine-rich splicing factor 4 (489 aa).

Positions 2-72 (PRVYIGRLSY…ERVIVEHARG (71 aa)) constitute an RRM 1 domain. 2 disordered regions span residues 72 to 95 (GPRR…GRDK) and 169 to 489 (KIRL…HSRS). A phosphoserine mark is found at serine 78 and serine 84. An RRM 2 domain is found at 104–177 (YRLIVENLSS…RKIRLVEDKP (74 aa)). Basic residues-rich tracts occupy residues 179-206 (SRRR…KSRS) and 214-246 (SHSK…KKEK). Positions 247–279 (SRSPSKDNKSRSRSRSPDKSRSKSKDHAEDKLQ) are enriched in basic and acidic residues. Residues serine 289, serine 291, and serine 293 each carry the phosphoserine modification. Basic and acidic residues predominate over residues 293–332 (SRHDSKSRSRSQERRAEEERRRSVSRARSQEKSRSQEKSL). Basic residues predominate over residues 333-356 (LKSRSRSRSRSRSRSKDKRKGRKR). Composition is skewed to basic and acidic residues over residues 357-370 (SRDE…SKSE) and 394-426 (KDTD…RAEG). Phosphoserine is present on residues serine 441, serine 453, and serine 455. 2 stretches are compositionally biased toward basic residues: residues 456 to 469 (RSKS…RSKS) and 479 to 489 (SRSRSRSHSRS).

This sequence belongs to the splicing factor SR family. Found in a pre-mRNA splicing complex with SRSF4/SFRS4, SRSF5/SFRS5, SNRNP70, SNRPA1, SRRM1 and SRRM2. Interacts with PNN. In terms of processing, extensively phosphorylated on serine residues in the RS domain.

It is found in the nucleus speckle. In terms of biological role, plays a role in alternative splice site selection during pre-mRNA splicing. Represses the splicing of MAPT/Tau exon 10. This Mus musculus (Mouse) protein is Serine/arginine-rich splicing factor 4 (Srsf4).